An 892-amino-acid polypeptide reads, in one-letter code: Smad protein daf-3 (892 aa).

2 disordered regions span residues 1 to 43 (MGDH…GLED) and 135 to 161 (PYLD…FDTK). Positions 15-26 (IPPQFNYSQPGT) are enriched in polar residues. The MH1 domain occupies 198–347 (KIVEYLMYYR…YEIVIGTMIV (150 aa)). Positions 505 to 552 (YPDFHHPFNQQPHQPPQLSQNHTSQQGSHQPGHQGQVPNDPPISRPVL) are disordered. A compositionally biased stretch (low complexity) spans 528–540 (SQQGSHQPGHQGQ). Residues 657 to 880 (WGTIVYYEKN…TNCFEPLGME (224 aa)) form the MH2 domain.

The protein belongs to the dwarfin/SMAD family. Interacts with R-SMADs daf-8 and daf-14. Interacts with daf-14 in a daf-8 dependent manner. May interact with daf-5.

Its subcellular location is the cytoplasm. The protein resides in the nucleus. It is found in the chromosome. Functionally, transcriptional regulator and common SMAD (co-SMAD), required to regulate entry into a developmentally arrested larval state known as dauer, in response to harsh environmental conditions. Probable component of transcriptional regulatory complex with SMAD protein daf-5. Acts antagonistically to SMAD signaling downstream of TGF-beta-like daf-7 signaling. Binds to the 5'-GTCTG-3' motif found in regulatory regions and may modulate the expression of genes involved in TGF-beta-like daf-7 and Notch lag-2 signaling. May regulate gene expression outside the dauer pathway. This Caenorhabditis elegans protein is Smad protein daf-3.